The sequence spans 82 residues: Small ribosomal subunit protein bS16 (82 aa).

The protein belongs to the bacterial ribosomal protein bS16 family.

In Glaesserella parasuis serovar 5 (strain SH0165) (Haemophilus parasuis), this protein is Small ribosomal subunit protein bS16.